Here is a 121-residue protein sequence, read N- to C-terminus: Large ribosomal subunit protein uL18 (121 aa).

It belongs to the universal ribosomal protein uL18 family. As to quaternary structure, part of the 50S ribosomal subunit; part of the 5S rRNA/L5/L18/L25 subcomplex. Contacts the 5S and 23S rRNAs.

In terms of biological role, this is one of the proteins that bind and probably mediate the attachment of the 5S RNA into the large ribosomal subunit, where it forms part of the central protuberance. The sequence is that of Large ribosomal subunit protein uL18 from Dehalococcoides mccartyi (strain ATCC BAA-2266 / KCTC 15142 / 195) (Dehalococcoides ethenogenes (strain 195)).